Consider the following 504-residue polypeptide: 6,7,8-trihydroxycoumarin synthase (504 aa).

A helical transmembrane segment spans residues 1-21; the sequence is MEPVFLFLILAFPIASVYLLF. A substrate specificity region spans residues 363–368; the sequence is PAPVLV. Heme is bound at residue Cys-444.

This sequence belongs to the cytochrome P450 family. It depends on heme as a cofactor.

The protein localises to the microsome membrane. It participates in secondary metabolite biosynthesis. In terms of biological role, involved in the biosynthesis of coumarins and furanocoumarins (FCs), natural products required for defense responses against attacks by predators with potential medical and agroindustrial usages such as anticoagulant, rodenticide and artificial vanilla substitutes. Able to catalyze the hydroxylation of esculetin to produce 6,7,8-trihydroxycoumarin. The protein is 6,7,8-trihydroxycoumarin synthase of Pastinaca sativa (Wild parsnip).